The chain runs to 485 residues: Arginine/agmatine antiporter (485 aa).

A run of 12 helical transmembrane segments spans residues 12-34 (GTIA…SLPQ), 38-60 (ATAG…FFIA), 89-111 (IGFT…YAVI), 126-148 (GGNT…FIVL), 155-177 (SIIN…ILTA), 211-230 (TMLV…VMSG), 243-265 (VLGF…GSLF), 291-313 (VLMN…IIVA), 363-385 (WNTM…AAFL), 400-422 (IKAP…LIYA), 427-446 (YLFM…IDAG), and 461-483 (IVGM…TGRI).

It belongs to the amino acid-polyamine-organocation (APC) superfamily. Basic amino acid/polyamine antiporter (APA) (TC 2.A.3.2) family.

The protein resides in the cell inner membrane. Catalyzes the exchange of L-arginine for agmatine. The arginine uptake by the bacterium in the macrophage may be a virulence factor against the host innate immune response. This is Arginine/agmatine antiporter (aaxC) from Chlamydia pneumoniae (Chlamydophila pneumoniae).